We begin with the raw amino-acid sequence, 428 residues long: Trigger factor (428 aa).

Residues 163–248 form the PPIase FKBP-type domain; the sequence is GDIVDIDFEG…VNDVKVKELP (86 aa).

Belongs to the FKBP-type PPIase family. Tig subfamily.

The protein localises to the cytoplasm. It catalyses the reaction [protein]-peptidylproline (omega=180) = [protein]-peptidylproline (omega=0). In terms of biological role, involved in protein export. Acts as a chaperone by maintaining the newly synthesized protein in an open conformation. Functions as a peptidyl-prolyl cis-trans isomerase. The polypeptide is Trigger factor (Acetivibrio thermocellus (strain ATCC 27405 / DSM 1237 / JCM 9322 / NBRC 103400 / NCIMB 10682 / NRRL B-4536 / VPI 7372) (Clostridium thermocellum)).